The following is a 300-amino-acid chain: Ribosomal RNA small subunit methyltransferase H (300 aa).

Residues 38-40 (GGH), glutamate 55, isoleucine 85, aspartate 102, and histidine 109 contribute to the S-adenosyl-L-methionine site.

Belongs to the methyltransferase superfamily. RsmH family.

The protein resides in the cytoplasm. It carries out the reaction cytidine(1402) in 16S rRNA + S-adenosyl-L-methionine = N(4)-methylcytidine(1402) in 16S rRNA + S-adenosyl-L-homocysteine + H(+). Specifically methylates the N4 position of cytidine in position 1402 (C1402) of 16S rRNA. This Brachyspira hyodysenteriae (strain ATCC 49526 / WA1) protein is Ribosomal RNA small subunit methyltransferase H.